The primary structure comprises 336 residues: Protein-lysine N-methyltransferase EFM3 (336 aa).

S-adenosyl-L-methionine contacts are provided by residues W147, 173 to 175 (GTG), D196, L232, and A251.

Belongs to the class I-like SAM-binding methyltransferase superfamily. EEF2KMT family.

It localises to the cytoplasm. In terms of biological role, S-adenosyl-L-methionine-dependent protein-lysine N-methyltransferase that methylates elongation factor 2. The chain is Protein-lysine N-methyltransferase EFM3 from Chaetomium thermophilum (strain DSM 1495 / CBS 144.50 / IMI 039719) (Thermochaetoides thermophila).